Consider the following 625-residue polypeptide: Sphingomyelin phosphodiesterase (625 aa).

The disordered stretch occupies residues 1–20; that stretch reads MPRHGVSPGQGLPRSGREQA. The signal sequence occupies residues 1-40; it reads MPRHGVSPGQGLPRSGREQASDRSLGAPCLRLLWLGLALA. Positions 81–165 constitute a Saposin B-type domain; sequence WNLTCPTCKG…LLGSSCGHWD (85 aa). N-linked (GlcNAc...) asparagine glycosylation is present at asparagine 82. 3 disulfide bridges follow: cysteine 85-cysteine 161, cysteine 88-cysteine 153, and cysteine 116-cysteine 127. The N-linked (GlcNAc...) asparagine glycan is linked to asparagine 171. Residues aspartate 202 and histidine 204 each contribute to the Zn(2+) site. Cystine bridges form between cysteine 217–cysteine 222 and cysteine 223–cysteine 246. Positions 274 and 314 each coordinate Zn(2+). 2 N-linked (GlcNAc...) asparagine glycosylation sites follow: asparagine 331 and asparagine 391. The cysteines at positions 381 and 427 are disulfide-linked. Histidine 421, histidine 453, and histidine 455 together coordinate Zn(2+). Asparagine 499 is a glycosylation site (N-linked (GlcNAc...) asparagine). Serine 504 is subject to Phosphoserine. Residue asparagine 516 is glycosylated (N-linked (GlcNAc...) asparagine). 2 cysteine pairs are disulfide-bonded: cysteine 580–cysteine 584 and cysteine 590–cysteine 603.

It belongs to the acid sphingomyelinase family. Monomer. Interacts with SORT1; the interaction is required for SMPD1 targeting to lysosomes. Requires Zn(2+) as cofactor. Post-translationally, proteolytically processed. Mature lysosomal form arises from C-terminal proteolytic processing of pro-sphingomyelin phosphodiesterase. In terms of processing, both lysosomal and secreted forms are glycosylated but they show a differential pattern of glycosylation. Phosphorylated at Ser-504 by PRKCD upon stress stimuli. Phosphorylation is required for secretion. Post-translationally, this form is generated following cleavage by CASP7 in the extracellular milieu. It shows increased activity.

The protein resides in the lysosome. It localises to the lipid droplet. Its subcellular location is the secreted. It is found in the extracellular space. The catalysed reaction is a sphingomyelin + H2O = phosphocholine + an N-acylsphing-4-enine + H(+). It catalyses the reaction N-(octadecanoyl)-sphing-4-enine-1-phosphocholine + H2O = N-octadecanoylsphing-4-enine + phosphocholine + H(+). It carries out the reaction a 1,2-diacyl-sn-glycero-3-phosphocholine + H2O = phosphocholine + a 1,2-diacyl-sn-glycerol + H(+). The enzyme catalyses 1,2-dihexadecanoyl-sn-glycero-3-phosphocholine + H2O = 1,2-dihexadecanoyl-sn-glycerol + phosphocholine + H(+). Hydrolysis of liposomal sphingomyelin is stimulated by incorporation of diacylglycerol (DAG), ceramide and free fatty acids into the liposomal membranes. Phosphatidylcholine hydrolysis is inhibited by incorporation of cholesterol, ceramide, DAG, monoacylglycerol and fatty acids. In terms of biological role, converts sphingomyelin to ceramide. Exists as two enzymatic forms that arise from alternative trafficking of a single protein precursor, one that is targeted to the endolysosomal compartment, whereas the other is released extracellularly. However, in response to various forms of stress, lysosomal exocytosis may represent a major source of the secretory form. Functionally, in the lysosomes, converts sphingomyelin to ceramide. Plays an important role in the export of cholesterol from the intraendolysosomal membranes. Also has phospholipase C activities toward 1,2-diacylglycerolphosphocholine and 1,2-diacylglycerolphosphoglycerol. Modulates stress-induced apoptosis through the production of ceramide. When secreted, modulates cell signaling with its ability to reorganize the plasma membrane by converting sphingomyelin to ceramide. Secreted form is increased in response to stress and inflammatory mediators such as IL1B, IFNG or TNF as well as upon infection with bacteria and viruses. Produces the release of ceramide in the outer leaflet of the plasma membrane playing a central role in host defense. Ceramide reorganizes these rafts into larger signaling platforms that are required to internalize bacteria, induce apoptosis and regulate the cytokine response in infected cells. In wounded cells, the lysosomal form is released extracellularly in the presence of Ca(2+) and promotes endocytosis and plasma membrane repair. Its function is as follows. This form is generated following cleavage by CASP7 in the extracellular milieu in response to bacterial infection. It shows increased ability to convert sphingomyelin to ceramide and promotes plasma membrane repair. Plasma membrane repair by ceramide counteracts the action of gasdermin-D (GSDMD) perforin (PRF1) pores that are formed in response to bacterial infection. This is Sphingomyelin phosphodiesterase (SMPD1) from Bos taurus (Bovine).